A 298-amino-acid chain; its full sequence is Rhodomycin D methylesterase DnrP (298 aa).

The 253-residue stretch at 25–277 (PLLLIAGGNL…VEIENMGHAL (253 aa)) folds into the AB hydrolase-1 domain.

This sequence belongs to the methyl esterase DnrP family.

The catalysed reaction is rhodomycin D + H2O = 10-carboxy-13-deoxycarminomycin + methanol + H(+). The enzyme catalyses 4-O-methylrhodomycin D + H2O = 10-carboxy-13-deoxydaunorubicin + methanol + H(+). Its pathway is antibiotic biosynthesis; daunorubicin biosynthesis. It functions in the pathway antibiotic biosynthesis; carminomycin biosynthesis. Its function is as follows. Involved in the biosynthesis of the anthracyclines carminomycin and daunorubicin (daunomycin) which are aromatic polyketide antibiotics that exhibit high cytotoxicity and are widely applied in the chemotherapy of a variety of cancers. Catalyzes the removal of methyl group from the carbomethoxy group of rhodomycin D (10-carbomethoxy-13-deoxycarminomycin) and 4-O-methylrhodomycin D to yield 10-carboxy-13-deoxycarminomycin and 10-carboxy-13-deoxydaunorubicin, respectively. Could be also involved in the decarboxylation of 10-carboxy-13-deoxycarminomycin and 10-carboxy-13-deoxydaunorubicin to yield 13-deoxycarminomycin and 13-deoxydaunorubicin, respectively. It seems that DnrK may influence the ability of DnrP to carry out the decarboxylation. In Streptomyces peucetius, this protein is Rhodomycin D methylesterase DnrP (dnrP).